Reading from the N-terminus, the 249-residue chain is Probable phosphatase VVA0289 (249 aa).

Zn(2+)-binding residues include histidine 8, histidine 10, histidine 16, histidine 41, glutamate 74, histidine 102, histidine 132, aspartate 194, and histidine 196.

Belongs to the PHP family. It depends on Zn(2+) as a cofactor.

This is Probable phosphatase VVA0289 from Vibrio vulnificus (strain YJ016).